The primary structure comprises 188 residues: GTP cyclohydrolase 1 (188 aa).

Residues Cys-76, His-79, and Cys-148 each coordinate Zn(2+).

It belongs to the GTP cyclohydrolase I family. As to quaternary structure, homomer.

The enzyme catalyses GTP + H2O = 7,8-dihydroneopterin 3'-triphosphate + formate + H(+). It participates in cofactor biosynthesis; 7,8-dihydroneopterin triphosphate biosynthesis; 7,8-dihydroneopterin triphosphate from GTP: step 1/1. This is GTP cyclohydrolase 1 from Pelotomaculum thermopropionicum (strain DSM 13744 / JCM 10971 / SI).